We begin with the raw amino-acid sequence, 444 residues long: MTLFRTLAPMGLALALLLPAAVPAAAQQGPLRIQITEGVIEPLPFAVPDFVAENAGASELARDMARVIASDLSGTGLFREIPASAHISRVTSFEAPVAYGDWKAINAQALITGSVSASGDRVVVKFRLYDVFSDQPLGEGLQFAGSASGWRRMAHKVADVAYSRITGEGGYFDSRVVFVSESGPKNARAKRLAVMDYDGANVQYLTDSSSIVLAPRFSPTGDRILFTSYSTGFPRIYLMDVGSLATRGLAEQPGTMTFAPRFAPDGRTVAFSLEQGGNTDIYTLDTGSGTRRQLTNSPSIETAPSYSPDGSQIVFESDRSGGQQLYIMPAGGGEPRRISNGAGRYGTPVWSPRGDLIAFTKQHQGRFHIGVMRTDGSEERLLTASFLDEGPTWAPNGRVLMFTREGAGAGGQPALYSVDISGRNLKKVPLSVPASDPAWSPLLP.

The signal sequence occupies residues 1–26 (MTLFRTLAPMGLALALLLPAAVPAAA). Residues 281-310 (IYTLDTGSGTRRQLTNSPSIETAPSYSPDG) show a composition bias toward polar residues. The interval 281 to 311 (IYTLDTGSGTRRQLTNSPSIETAPSYSPDGS) is disordered.

Belongs to the TolB family. As to quaternary structure, the Tol-Pal system is composed of five core proteins: the inner membrane proteins TolA, TolQ and TolR, the periplasmic protein TolB and the outer membrane protein Pal. They form a network linking the inner and outer membranes and the peptidoglycan layer.

It is found in the periplasm. In terms of biological role, part of the Tol-Pal system, which plays a role in outer membrane invagination during cell division and is important for maintaining outer membrane integrity. The chain is Tol-Pal system protein TolB from Cereibacter sphaeroides (strain ATCC 17029 / ATH 2.4.9) (Rhodobacter sphaeroides).